A 111-amino-acid chain; its full sequence is Cytochrome c (111 aa).

Alanine 1 bears the N-acetylalanine mark. The heme c site is built by cysteine 22, cysteine 25, and histidine 26. Lysine 80 carries the N6,N6,N6-trimethyllysine modification. A heme c-binding site is contributed by methionine 88. An N6,N6,N6-trimethyllysine modification is found at lysine 94.

The protein belongs to the cytochrome c family. Binds 1 heme c group covalently per subunit.

Its subcellular location is the mitochondrion intermembrane space. In terms of biological role, electron carrier protein. The oxidized form of the cytochrome c heme group can accept an electron from the heme group of the cytochrome c1 subunit of cytochrome reductase. Cytochrome c then transfers this electron to the cytochrome oxidase complex, the final protein carrier in the mitochondrial electron-transport chain. This chain is Cytochrome c, found in Sesamum indicum (Oriental sesame).